The sequence spans 549 residues: Glucose-6-phosphate isomerase (549 aa).

Glu-355 acts as the Proton donor in catalysis. Active-site residues include His-386 and Lys-514.

This sequence belongs to the GPI family.

The protein resides in the cytoplasm. The enzyme catalyses alpha-D-glucose 6-phosphate = beta-D-fructose 6-phosphate. It participates in carbohydrate biosynthesis; gluconeogenesis. It functions in the pathway carbohydrate degradation; glycolysis; D-glyceraldehyde 3-phosphate and glycerone phosphate from D-glucose: step 2/4. Functionally, catalyzes the reversible isomerization of glucose-6-phosphate to fructose-6-phosphate. This chain is Glucose-6-phosphate isomerase, found in Salmonella paratyphi B (strain ATCC BAA-1250 / SPB7).